We begin with the raw amino-acid sequence, 156 residues long: Small ribosomal subunit protein uS7 (156 aa).

Belongs to the universal ribosomal protein uS7 family. As to quaternary structure, part of the 30S ribosomal subunit. Contacts proteins S9 and S11.

One of the primary rRNA binding proteins, it binds directly to 16S rRNA where it nucleates assembly of the head domain of the 30S subunit. Is located at the subunit interface close to the decoding center, probably blocks exit of the E-site tRNA. The chain is Small ribosomal subunit protein uS7 from Shewanella denitrificans (strain OS217 / ATCC BAA-1090 / DSM 15013).